A 592-amino-acid polypeptide reads, in one-letter code: Aspartate--tRNA ligase (592 aa).

An L-aspartate-binding site is contributed by Glu-171. An aspartate region spans residues 195 to 198 (QLFK). Residue Arg-217 coordinates L-aspartate. Residues 217–219 (RDE) and Gln-226 each bind ATP. L-aspartate is bound at residue His-448. Glu-482 contributes to the ATP binding site. Arg-489 lines the L-aspartate pocket. Position 534 to 537 (534 to 537 (GLDR)) interacts with ATP.

The protein belongs to the class-II aminoacyl-tRNA synthetase family. Type 1 subfamily. In terms of assembly, homodimer.

The protein resides in the cytoplasm. It carries out the reaction tRNA(Asp) + L-aspartate + ATP = L-aspartyl-tRNA(Asp) + AMP + diphosphate. In terms of biological role, catalyzes the attachment of L-aspartate to tRNA(Asp) in a two-step reaction: L-aspartate is first activated by ATP to form Asp-AMP and then transferred to the acceptor end of tRNA(Asp). The protein is Aspartate--tRNA ligase of Vibrio parahaemolyticus serotype O3:K6 (strain RIMD 2210633).